The primary structure comprises 248 residues: Triosephosphate isomerase (248 aa).

Residue 9 to 11 (NWK) coordinates substrate. The active-site Electrophile is His94. Catalysis depends on Glu166, which acts as the Proton acceptor. Substrate is bound by residues Gly172, Ser212, and 233 to 234 (GG).

It belongs to the triosephosphate isomerase family. In terms of assembly, homodimer.

It localises to the cytoplasm. The enzyme catalyses D-glyceraldehyde 3-phosphate = dihydroxyacetone phosphate. It functions in the pathway carbohydrate biosynthesis; gluconeogenesis. The protein operates within carbohydrate degradation; glycolysis; D-glyceraldehyde 3-phosphate from glycerone phosphate: step 1/1. Its function is as follows. Involved in the gluconeogenesis. Catalyzes stereospecifically the conversion of dihydroxyacetone phosphate (DHAP) to D-glyceraldehyde-3-phosphate (G3P). In Thermoanaerobacter sp. (strain X514), this protein is Triosephosphate isomerase.